The following is a 141-amino-acid chain: Putative pre-16S rRNA nuclease (141 aa).

It belongs to the YqgF nuclease family.

It localises to the cytoplasm. In terms of biological role, could be a nuclease involved in processing of the 5'-end of pre-16S rRNA. This Histophilus somni (strain 129Pt) (Haemophilus somnus) protein is Putative pre-16S rRNA nuclease.